Reading from the N-terminus, the 324-residue chain is Glyoxylate/hydroxypyruvate reductase B (324 aa).

Catalysis depends on residues Arg-237 and Glu-266. The active-site Proton donor is His-285.

The protein belongs to the D-isomer specific 2-hydroxyacid dehydrogenase family. GhrB subfamily. Homodimer.

The protein resides in the cytoplasm. The catalysed reaction is glycolate + NADP(+) = glyoxylate + NADPH + H(+). It catalyses the reaction (R)-glycerate + NAD(+) = 3-hydroxypyruvate + NADH + H(+). The enzyme catalyses (R)-glycerate + NADP(+) = 3-hydroxypyruvate + NADPH + H(+). Its function is as follows. Catalyzes the NADPH-dependent reduction of glyoxylate and hydroxypyruvate into glycolate and glycerate, respectively. The sequence is that of Glyoxylate/hydroxypyruvate reductase B from Escherichia fergusonii (strain ATCC 35469 / DSM 13698 / CCUG 18766 / IAM 14443 / JCM 21226 / LMG 7866 / NBRC 102419 / NCTC 12128 / CDC 0568-73).